The chain runs to 448 residues: Probable ribonuclease FAU-1 (448 aa).

The tract at residues 426-448 is disordered; it reads EAPGGKICTSEGLTSALPQSSSA. Positions 436–448 are enriched in polar residues; sequence EGLTSALPQSSSA.

Belongs to the FAU-1 family.

Its function is as follows. Probable RNase involved in rRNA stability through maturation and/or degradation of precursor rRNAs. Binds to RNA in loop regions with AU-rich sequences. The protein is Probable ribonuclease FAU-1 of Pyrobaculum islandicum (strain DSM 4184 / JCM 9189 / GEO3).